The following is a 246-amino-acid chain: Uridylate kinase (246 aa).

19–22 (KISG) contributes to the ATP binding site. G61 is a binding site for UMP. G62 and R66 together coordinate ATP. Residues D81 and 142–149 (TGNPFFTT) contribute to the UMP site. ATP-binding residues include T169, Q170, Y175, and D178.

Belongs to the UMP kinase family. Homohexamer.

It localises to the cytoplasm. The catalysed reaction is UMP + ATP = UDP + ADP. It functions in the pathway pyrimidine metabolism; CTP biosynthesis via de novo pathway; UDP from UMP (UMPK route): step 1/1. With respect to regulation, inhibited by UTP. Functionally, catalyzes the reversible phosphorylation of UMP to UDP. The sequence is that of Uridylate kinase from Wolbachia sp. subsp. Brugia malayi (strain TRS).